Here is a 190-residue protein sequence, read N- to C-terminus: dCTP deaminase, dUMP-forming (190 aa).

DCTP-binding positions include 101-106, Asp-119, 127-129, Gln-148, Tyr-162, and Gln-174; these read KSSLGR and TLE. Glu-129 (proton donor/acceptor) is an active-site residue. The segment at 162–184 is disordered; sequence YGSAKVGSKYQGQRGPTPSRSYQ. The segment covering 171 to 184 has biased composition (polar residues); sequence YQGQRGPTPSRSYQ.

Belongs to the dCTP deaminase family. As to quaternary structure, homotrimer.

The enzyme catalyses dCTP + 2 H2O = dUMP + NH4(+) + diphosphate. Its pathway is pyrimidine metabolism; dUMP biosynthesis; dUMP from dCTP: step 1/1. Bifunctional enzyme that catalyzes both the deamination of dCTP to dUTP and the hydrolysis of dUTP to dUMP without releasing the toxic dUTP intermediate. In Mycobacterium sp. (strain JLS), this protein is dCTP deaminase, dUMP-forming.